The chain runs to 401 residues: Argininosuccinate synthase (401 aa).

9-17 (AYSGGLDTS) provides a ligand contact to ATP. Tyrosine 88 contributes to the L-citrulline binding site. Glycine 118 lines the ATP pocket. L-aspartate contacts are provided by threonine 120, asparagine 124, and aspartate 125. Position 124 (asparagine 124) interacts with L-citrulline. L-citrulline contacts are provided by arginine 128, serine 177, serine 186, glutamate 262, and tyrosine 274.

The protein belongs to the argininosuccinate synthase family. Type 1 subfamily. In terms of assembly, homotetramer.

The protein resides in the cytoplasm. It catalyses the reaction L-citrulline + L-aspartate + ATP = 2-(N(omega)-L-arginino)succinate + AMP + diphosphate + H(+). Its pathway is amino-acid biosynthesis; L-arginine biosynthesis; L-arginine from L-ornithine and carbamoyl phosphate: step 2/3. This chain is Argininosuccinate synthase, found in Chlorobaculum tepidum (strain ATCC 49652 / DSM 12025 / NBRC 103806 / TLS) (Chlorobium tepidum).